The following is a 627-amino-acid chain: Phosphomethylpyrimidine synthase (627 aa).

Residues Asn-233, Met-262, Tyr-291, His-327, 347–349 (SRG), 388–391 (DGLR), and Glu-427 contribute to the substrate site. His-431 serves as a coordination point for Zn(2+). Tyr-454 is a substrate binding site. His-495 lines the Zn(2+) pocket. [4Fe-4S] cluster is bound by residues Cys-575, Cys-578, and Cys-583.

It belongs to the ThiC family. As to quaternary structure, homodimer. It depends on [4Fe-4S] cluster as a cofactor.

The enzyme catalyses 5-amino-1-(5-phospho-beta-D-ribosyl)imidazole + S-adenosyl-L-methionine = 4-amino-2-methyl-5-(phosphooxymethyl)pyrimidine + CO + 5'-deoxyadenosine + formate + L-methionine + 3 H(+). The protein operates within cofactor biosynthesis; thiamine diphosphate biosynthesis. Catalyzes the synthesis of the hydroxymethylpyrimidine phosphate (HMP-P) moiety of thiamine from aminoimidazole ribotide (AIR) in a radical S-adenosyl-L-methionine (SAM)-dependent reaction. This is Phosphomethylpyrimidine synthase from Acidithiobacillus ferrooxidans (strain ATCC 23270 / DSM 14882 / CIP 104768 / NCIMB 8455) (Ferrobacillus ferrooxidans (strain ATCC 23270)).